The chain runs to 155 residues: Ribosome maturation factor RimP (155 aa).

Belongs to the RimP family.

The protein localises to the cytoplasm. Required for maturation of 30S ribosomal subunits. The protein is Ribosome maturation factor RimP of Staphylococcus carnosus (strain TM300).